A 78-amino-acid polypeptide reads, in one-letter code: uncharacterized protein (78 aa).

The segment at 51 to 78 (GGKWDGGGSGGKWNGGGGSGGGSWKKWN) is disordered.

This is an uncharacterized protein from Dictyostelium discoideum (Social amoeba).